Consider the following 406-residue polypeptide: Coenzyme A biosynthesis bifunctional protein CoaBC (406 aa).

The tract at residues 2–190 (SLAGKKIVLG…SPVNDLKHLN (189 aa)) is phosphopantothenoylcysteine decarboxylase. Catalysis depends on C158, which acts as the Proton donor. The segment at 191–406 (IMITAGPTRE…VTRYDEKNRR (216 aa)) is phosphopantothenate--cysteine ligase. Residues 273–275 (GCA), D279, K289, 308–311 (PDIV), F327, K341, and K345 each bind CTP.

This sequence in the N-terminal section; belongs to the HFCD (homo-oligomeric flavin containing Cys decarboxylase) superfamily. In the C-terminal section; belongs to the PPC synthetase family. Mg(2+) is required as a cofactor. Requires FMN as cofactor.

It catalyses the reaction N-[(R)-4-phosphopantothenoyl]-L-cysteine + H(+) = (R)-4'-phosphopantetheine + CO2. The catalysed reaction is (R)-4'-phosphopantothenate + L-cysteine + CTP = N-[(R)-4-phosphopantothenoyl]-L-cysteine + CMP + diphosphate + H(+). Its pathway is cofactor biosynthesis; coenzyme A biosynthesis; CoA from (R)-pantothenate: step 2/5. It participates in cofactor biosynthesis; coenzyme A biosynthesis; CoA from (R)-pantothenate: step 3/5. Its function is as follows. Catalyzes two sequential steps in the biosynthesis of coenzyme A. In the first step cysteine is conjugated to 4'-phosphopantothenate to form 4-phosphopantothenoylcysteine. In the second step the latter compound is decarboxylated to form 4'-phosphopantotheine. The sequence is that of Coenzyme A biosynthesis bifunctional protein CoaBC from Escherichia coli O6:H1 (strain CFT073 / ATCC 700928 / UPEC).